Reading from the N-terminus, the 264-residue chain is 5'-nucleotidase SurE (264 aa).

Residues Asp12, Asp13, Ser43, and Asn98 each contribute to the a divalent metal cation site.

Belongs to the SurE nucleotidase family. Requires a divalent metal cation as cofactor.

The protein localises to the cytoplasm. It catalyses the reaction a ribonucleoside 5'-phosphate + H2O = a ribonucleoside + phosphate. Its function is as follows. Nucleotidase that shows phosphatase activity on nucleoside 5'-monophosphates. This chain is 5'-nucleotidase SurE, found in Sulfurovum sp. (strain NBC37-1).